The primary structure comprises 376 residues: Flagellar P-ring protein (376 aa).

Positions 1 to 29 (MTQRPFSLLSHLGRICLAAAMLAALPAQA) are cleaved as a signal peptide.

The protein belongs to the FlgI family. The basal body constitutes a major portion of the flagellar organelle and consists of four rings (L,P,S, and M) mounted on a central rod.

The protein localises to the periplasm. Its subcellular location is the bacterial flagellum basal body. Assembles around the rod to form the L-ring and probably protects the motor/basal body from shearing forces during rotation. The sequence is that of Flagellar P-ring protein from Bordetella avium (strain 197N).